The chain runs to 620 residues: Glutathione-regulated potassium-efflux system protein KefC (620 aa).

12 helical membrane passes run 4–24 (HTLI…PIAV), 26–46 (LGLG…PWGL), 54–74 (SILH…GLEL), 90–110 (GALQ…LLGL), 114–134 (VAEL…MQAM), 149–169 (FAVL…IPLL), 178–198 (MGAF…VVLL), 218–238 (VFSA…EEVG), 270–290 (GLLL…GTLI), 294–314 (LRIV…LWLI), 327–347 (WFAV…GAAQ), and 359–379 (SLTL…VILN). Residues 399–518 (QPRVIIAGFG…AGVEKPERET (120 aa)) form the RCK N-terminal domain. A disordered region spans residues 597 to 620 (GWQGTEEGKHTGNMADEPETKPSS).

It belongs to the monovalent cation:proton antiporter 2 (CPA2) transporter (TC 2.A.37) family. KefC subfamily. Homodimer. Interacts with the regulatory subunit KefF.

Its subcellular location is the cell inner membrane. Pore-forming subunit of a potassium efflux system that confers protection against electrophiles. Catalyzes K(+)/H(+) antiport. The protein is Glutathione-regulated potassium-efflux system protein KefC of Escherichia coli O45:K1 (strain S88 / ExPEC).